The following is a 64-amino-acid chain: Large ribosomal subunit protein uL30 (64 aa).

Residues Met-1–Ser-22 are disordered.

Belongs to the universal ribosomal protein uL30 family. As to quaternary structure, part of the 50S ribosomal subunit.

The polypeptide is Large ribosomal subunit protein uL30 (Nitrobacter hamburgensis (strain DSM 10229 / NCIMB 13809 / X14)).